Reading from the N-terminus, the 322-residue chain is Malate dehydrogenase (322 aa).

NAD(+) contacts are provided by residues Gly-10 to Gly-15 and Asp-34. Arg-83 and Arg-89 together coordinate substrate. NAD(+) is bound by residues Asn-96 and Ile-119–Asn-121. The substrate site is built by Asn-121 and Arg-152. The active-site Proton acceptor is His-176.

The protein belongs to the LDH/MDH superfamily. MDH type 3 family.

It catalyses the reaction (S)-malate + NAD(+) = oxaloacetate + NADH + H(+). Catalyzes the reversible oxidation of malate to oxaloacetate. The protein is Malate dehydrogenase of Rhodopseudomonas palustris (strain HaA2).